Consider the following 121-residue polypeptide: Protein opa (121 aa).

Belongs to the opacity porin family.

This chain is Protein opa (opa), found in Haemophilus influenzae (strain ATCC 51907 / DSM 11121 / KW20 / Rd).